Here is a 58-residue protein sequence, read N- to C-terminus: Probable ferredoxin (58 aa).

4Fe-4S ferredoxin-type domains are found at residues 2 to 30 (VAKV…LNDD) and 31 to 58 (GIAT…ITIE). Positions 10, 13, 16, 20, 40, 43, 46, and 50 each coordinate [4Fe-4S] cluster.

Requires [4Fe-4S] cluster as cofactor.

In terms of biological role, ferredoxins are iron-sulfur proteins that transfer electrons in a wide variety of metabolic reactions. This is Probable ferredoxin from Methanosarcina thermophila.